Consider the following 148-residue polypeptide: Putative pre-16S rRNA nuclease (148 aa).

This sequence belongs to the YqgF nuclease family.

The protein resides in the cytoplasm. Could be a nuclease involved in processing of the 5'-end of pre-16S rRNA. This is Putative pre-16S rRNA nuclease from Chromohalobacter salexigens (strain ATCC BAA-138 / DSM 3043 / CIP 106854 / NCIMB 13768 / 1H11).